A 376-amino-acid chain; its full sequence is Beta-centractin (376 aa).

An N-acetylmethionine modification is found at Met-1. Tyr-4 is modified (3'-nitrotyrosine).

Belongs to the actin family. ARP1 subfamily.

The protein resides in the cytoplasm. Its subcellular location is the cytoskeleton. It localises to the microtubule organizing center. It is found in the centrosome. Component of a multi-subunit complex involved in microtubule based vesicle motility. It is associated with the centrosome. This Homo sapiens (Human) protein is Beta-centractin (ACTR1B).